We begin with the raw amino-acid sequence, 68 residues long: Conotoxin VnMMSK-01 (68 aa).

An N-terminal signal peptide occupies residues 1–20 (MMSKLGVLLTICLLLFPLTA). A propeptide spanning residues 21 to 50 (VPMDGDQPADLPALRTQDFEPERSPWFDPV) is cleaved from the precursor. 3 cysteine pairs are disulfide-bonded: Cys53–Cys65, Cys54–Cys61, and Cys58–Cys64. Position 63 is a 4-hydroxyproline (Pro63).

This sequence belongs to the conotoxin M superfamily. Expressed by the venom duct.

The protein resides in the secreted. The polypeptide is Conotoxin VnMMSK-01 (Conus ventricosus (Mediterranean cone)).